A 491-amino-acid polypeptide reads, in one-letter code: MTTATTVKTEYEAIIGLETHCQLSTKTKIFSNSSTAFGADPNTNIDPVCMGLPGVLPVLNEKVLEYAVKTGLALNCQIARYSKFDRKQYFYPDLPKNYQISQYDLPIAEHGWLEIELVDAEGNPSRKRIGITRLHMEEDAGKLVHAGSDRLSGSSYSLVDYNRAGIPLVEIVSEPDLRSGLEAAEYAEELRRIVRYLGVSDGNMQEGSLRCDVNISVRPVGRKEFGTKVEIKNMNSFSAIQRAIDYEIERQIAAIEAGDRIIQETRLWEEGAQRTSSMRVKEGSSDYRYFPEPDLAPIEVSNEQLENWRSELPELPAQKRHHYESELGLSAYDARVLTEDRSIAEYFETAIASGANPKAAANWITQDIAAHLNKQKLTITQIELTPTNLAEIITRIETGKISNAQAKEKLPDLLSGISPEKAFAGLELITDPTVLEPIVDEVIAANPKELEKYRNGNTNLKGFFVGQVLKKTAKRADPKLTNELVEKKLNA.

Belongs to the GatB/GatE family. GatB subfamily. In terms of assembly, heterotrimer of A, B and C subunits.

The enzyme catalyses L-glutamyl-tRNA(Gln) + L-glutamine + ATP + H2O = L-glutaminyl-tRNA(Gln) + L-glutamate + ADP + phosphate + H(+). It carries out the reaction L-aspartyl-tRNA(Asn) + L-glutamine + ATP + H2O = L-asparaginyl-tRNA(Asn) + L-glutamate + ADP + phosphate + 2 H(+). Its function is as follows. Allows the formation of correctly charged Asn-tRNA(Asn) or Gln-tRNA(Gln) through the transamidation of misacylated Asp-tRNA(Asn) or Glu-tRNA(Gln) in organisms which lack either or both of asparaginyl-tRNA or glutaminyl-tRNA synthetases. The reaction takes place in the presence of glutamine and ATP through an activated phospho-Asp-tRNA(Asn) or phospho-Glu-tRNA(Gln). The protein is Aspartyl/glutamyl-tRNA(Asn/Gln) amidotransferase subunit B of Nostoc punctiforme (strain ATCC 29133 / PCC 73102).